The following is an 885-amino-acid chain: Cadherin-related family member 3 (885 aa).

Residues 1–19 (MQEAIILLALLGAMSGGEA) form the signal peptide. Topologically, residues 20 to 713 (LHLILLPATG…VYSPSAWYVP (694 aa)) are extracellular. Cadherin domains are found at residues 23-132 (ILLP…PPQF), 136-236 (LAEG…VPRF), 237-344 (TSPT…NPAT), 346-466 (QKFT…RPSY), 462-566 (DRPS…KPIC), and 567-695 (TPNS…RPRV). Asparagine 186 and asparagine 257 each carry an N-linked (GlcNAc...) asparagine glycan. An N-linked (GlcNAc...) asparagine glycan is attached at asparagine 624. The helical transmembrane segment at 714-734 (FVITLGSILLLGLLVYLVVLL) threads the bilayer. Over 735–885 (AKAIHRHCPC…RAYPKPHPGK (151 aa)) the chain is Cytoplasmic. The tract at residues 808 to 885 (MPKWKESSHQ…RAYPKPHPGK (78 aa)) is disordered.

(Microbial infection) Interacts (via N-terminus) with human rhinovirus C capsid proteins VP1, VP2 and VP3. Expressed in bronchial epithelium from adults and in fetal lung tissue.

The protein resides in the cell membrane. Functionally, cadherins are calcium-dependent cell adhesion proteins. They preferentially interact with themselves in a homophilic manner in connecting cells; cadherins may thus contribute to the sorting of heterogeneous cell types. (Microbial infection) Acts as a receptor for human rhinovirus C. In Homo sapiens (Human), this protein is Cadherin-related family member 3 (CDHR3).